The chain runs to 530 residues: NMDA receptor synaptonuclear signaling and neuronal migration factor (530 aa).

The N-myristoyl glycine moiety is linked to residue G2. A necessary and sufficient to elicit dendritic processes and synaptic contacts region spans residues 2–233 (GAAASRRRAL…FSFQTATTTM (232 aa)). Disordered regions lie at residues 34 to 67 (SQSH…APQN) and 125 to 197 (KGRR…GRRK). A compositionally biased stretch (basic and acidic residues) spans 38–48 (PENRNGADHLL). The segment covering 125–137 (KGRRQRHPHHHSQ) has biased composition (basic residues). A compositionally biased stretch (polar residues) spans 153–162 (PCQSWAGSRQ). S204 carries the phosphoserine modification. A Nuclear localization signal motif is present at residues 247 to 250 (RRKR). The tract at residues 285 to 312 (RSFSRSWSDPTPMKADTSHDSRDSSDLQ) is disordered. Residues S290 and S292 each carry the phosphoserine modification. Residues 300-309 (DTSHDSRDSS) are compositionally biased toward basic and acidic residues.

Belongs to the NSMF family. As to quaternary structure, interacts with KPNA1; the interaction occurs in a calcium-independent manner after synaptic NMDA receptor stimulation and is required for nuclear import of NSMF but is competed by CABP1. Interacts (via the central NLS-containing motif region) with CABP1 (via EF-hands 1 and 2); the interaction occurs in a calcium-dependent manner after synaptic NMDA receptor stimulation and prevents the nuclear import of NSMF. Cannot be competed by calmodulin. Post-translationally, proteolytically processed after NMDA receptor activation. Cleaved in a calcium-dependent and calpain-sensitive manner. Calpain cleavage is essential for the translocation process from dendrites to the nucleus. In terms of tissue distribution, highly expressed in adult and fetal brain. Weakly expressed in heart, liver, spleen, testis, small intestine, skeletal muscle, peripheral white blood cells and kidney.

The protein resides in the nucleus. Its subcellular location is the nucleus envelope. It localises to the nucleus membrane. It is found in the nucleus matrix. The protein localises to the cytoplasm. The protein resides in the cell cortex. Its subcellular location is the cytoskeleton. It localises to the cell membrane. It is found in the cell projection. The protein localises to the dendrite. The protein resides in the synapse. Its subcellular location is the synaptosome. It localises to the postsynaptic density. It is found in the membrane. Couples NMDA-sensitive glutamate receptor signaling to the nucleus and triggers long-lasting changes in the cytoarchitecture of dendrites and spine synapse processes. Part of the cAMP response element-binding protein (CREB) shut-off signaling pathway. Stimulates outgrowth of olfactory axons and migration of gonadotropin-releasing hormone (GnRH) and luteinizing-hormone-releasing hormone (LHRH) neuronal cells. The protein is NMDA receptor synaptonuclear signaling and neuronal migration factor (NSMF) of Homo sapiens (Human).